The primary structure comprises 314 residues: MKHLLSIADLDRESAVELLDEAERFEQALLGREVRKLPTLRGRTVMTVFFENSTRTRVSFEVAGKWMSADVINVSASSSSVSKGESLRDTAMTLRAAGADALIVRHPASGAAHQIAKWTGAADDGGPAVINAGDGTHEHPTQALLDALTLRQRLGDIEGKRIAIVGDILHSRVARSNALLLSMLGAEVVLVAPPTLLPVGAHTWPVTVSHSLDAELPGLDAVLMLRVQAERMNGGFFPSQREYSINYGLSEKRLAMLADHAVVLHPGPMLRGMEIASAVADSSKTAVLQQVTNGVHMRMAVLFRLLVGSEDGAL.

The carbamoyl phosphate site is built by Arg55 and Thr56. L-aspartate is bound at residue Lys83. Residues Arg105, His139, and Gln142 each contribute to the carbamoyl phosphate site. L-aspartate is bound by residues Arg172 and Arg226. Carbamoyl phosphate contacts are provided by Gly267 and Pro268.

It belongs to the aspartate/ornithine carbamoyltransferase superfamily. ATCase family. As to quaternary structure, heterododecamer (2C3:3R2) of six catalytic PyrB chains organized as two trimers (C3), and six regulatory PyrI chains organized as three dimers (R2).

The catalysed reaction is carbamoyl phosphate + L-aspartate = N-carbamoyl-L-aspartate + phosphate + H(+). Its pathway is pyrimidine metabolism; UMP biosynthesis via de novo pathway; (S)-dihydroorotate from bicarbonate: step 2/3. In terms of biological role, catalyzes the condensation of carbamoyl phosphate and aspartate to form carbamoyl aspartate and inorganic phosphate, the committed step in the de novo pyrimidine nucleotide biosynthesis pathway. The polypeptide is Aspartate carbamoyltransferase catalytic subunit (Rhodococcus erythropolis (strain PR4 / NBRC 100887)).